Reading from the N-terminus, the 308-residue chain is tRNA pseudouridine synthase B (308 aa).

Aspartate 48 serves as the catalytic Nucleophile.

It belongs to the pseudouridine synthase TruB family. Type 1 subfamily.

It carries out the reaction uridine(55) in tRNA = pseudouridine(55) in tRNA. Its function is as follows. Responsible for synthesis of pseudouridine from uracil-55 in the psi GC loop of transfer RNAs. This is tRNA pseudouridine synthase B from Histophilus somni (strain 129Pt) (Haemophilus somnus).